The primary structure comprises 351 residues: Probable RNA methyltransferase BAV1540 (351 aa).

Residue E90 is the Proton acceptor of the active site. One can recognise a Radical SAM core domain in the interval L93 to D319. A disulfide bridge connects residues C100 and C324. [4Fe-4S] cluster-binding residues include C107, C111, and C114. S-adenosyl-L-methionine contacts are provided by residues G152–E153, S182, S205–H207, and N281. The active-site S-methylcysteine intermediate is C324.

This sequence belongs to the radical SAM superfamily. RlmN family. It depends on [4Fe-4S] cluster as a cofactor.

The protein resides in the cytoplasm. This Bordetella avium (strain 197N) protein is Probable RNA methyltransferase BAV1540.